A 154-amino-acid polypeptide reads, in one-letter code: MTGIREGEKELSLLGSKTEYRNDYAPEVLEAFTNKHQENDYWVRFNCPEFTSLCPITGQPDFATIYINYIPDVKMVESKSLKLYLFSFRNHGAFHEDCVNIIMKDLIALMQPRYIEVWGDFTPRGGISIVPFCNYGKPGSRYELLAEKRMETHH.

Cys-54 serves as the catalytic Thioimide intermediate. Asp-61 acts as the Proton donor in catalysis. Substrate-binding positions include Val-76–Ser-78 and His-95–Glu-96.

The protein belongs to the GTP cyclohydrolase I family. QueF type 1 subfamily.

It is found in the cytoplasm. It carries out the reaction 7-aminomethyl-7-carbaguanine + 2 NADP(+) = 7-cyano-7-deazaguanine + 2 NADPH + 3 H(+). It functions in the pathway tRNA modification; tRNA-queuosine biosynthesis. Functionally, catalyzes the NADPH-dependent reduction of 7-cyano-7-deazaguanine (preQ0) to 7-aminomethyl-7-deazaguanine (preQ1). The sequence is that of NADPH-dependent 7-cyano-7-deazaguanine reductase from Porphyromonas gingivalis (strain ATCC 33277 / DSM 20709 / CIP 103683 / JCM 12257 / NCTC 11834 / 2561).